The following is a 156-amino-acid chain: MPRRREVAKRVILPDPKFNDRVVAKLVSVIMLDGKKSTAERALYGALDIVSQKAGEEPVKVLKKCLDNIKPMLGVKSRRVGGSTYQVPVEVRADRRVSLAMRWLVRYANERSEKTITDKLAGEILDAYNNRGAAVKKREDTHRMAEANRAFAHYRW.

It belongs to the universal ribosomal protein uS7 family. In terms of assembly, part of the 30S ribosomal subunit. Contacts proteins S9 and S11.

One of the primary rRNA binding proteins, it binds directly to 16S rRNA where it nucleates assembly of the head domain of the 30S subunit. Is located at the subunit interface close to the decoding center, probably blocks exit of the E-site tRNA. In Geobacter sulfurreducens (strain ATCC 51573 / DSM 12127 / PCA), this protein is Small ribosomal subunit protein uS7.